A 320-amino-acid polypeptide reads, in one-letter code: SPX domain-containing protein 4 (320 aa).

Residues 1-170 enclose the SPX domain; the sequence is MKFGKDFRSH…GGLLSLPFTQ (170 aa). Disordered stretches follow at residues 209–233 and 275–320; these read SSSAKLQPQNDDAASHDPASSVDVE and CSGA…PRDE. Residues 278 to 289 show a composition bias toward polar residues; that stretch reads AITSESDSYSDS. A compositionally biased stretch (acidic residues) spans 290 to 299; that stretch reads QIEDAEDDDK. A compositionally biased stretch (polar residues) spans 304–313; that stretch reads REQNTAQNAA.

Homodimer. Interacts (via N-terminus) with PHR2 (via C-terminus) in the presence of inositol polyphosphate. Interacts with BHLH6. Degraded under Pi starvation conditions through the ubiquitin/26S proteasome pathway. As to expression, widely expressed. Detected in root cells, with the exception of epidermis, and in mesophyll and vascular bundles in leaves.

It is found in the membrane. The protein resides in the nucleus. It localises to the cytoplasm. Its function is as follows. Inositol polyphosphate sensor that associates with transcription factors to regulate Pi starvation responses. The SPX domain provides a basic binding surface for inositol polyphosphate signaling molecules. Interacts with PHR2 to inhibit its translocation to the nucleus and repress its DNA-binding activity, and then negatively regulate Pi signaling. This chain is SPX domain-containing protein 4, found in Oryza sativa subsp. japonica (Rice).